We begin with the raw amino-acid sequence, 50 residues long: uncharacterized protein (50 aa).

Residues 10-29 (LFFYYPFFIIFLYIYLVFFI) traverse the membrane as a helical segment.

It localises to the plastid. Its subcellular location is the chloroplast membrane. This is an uncharacterized protein from Marchantia polymorpha (Common liverwort).